The sequence spans 425 residues: Serine hydroxymethyltransferase (425 aa).

Residues L123 and 127–129 contribute to the (6S)-5,6,7,8-tetrahydrofolate site; that span reads GHL. K232 bears the N6-(pyridoxal phosphate)lysine mark. E248 contacts (6S)-5,6,7,8-tetrahydrofolate.

The protein belongs to the SHMT family. As to quaternary structure, homodimer. It depends on pyridoxal 5'-phosphate as a cofactor.

The protein resides in the cytoplasm. The enzyme catalyses (6R)-5,10-methylene-5,6,7,8-tetrahydrofolate + glycine + H2O = (6S)-5,6,7,8-tetrahydrofolate + L-serine. The protein operates within one-carbon metabolism; tetrahydrofolate interconversion. It functions in the pathway amino-acid biosynthesis; glycine biosynthesis; glycine from L-serine: step 1/1. Functionally, catalyzes the reversible interconversion of serine and glycine with tetrahydrofolate (THF) serving as the one-carbon carrier. This reaction serves as the major source of one-carbon groups required for the biosynthesis of purines, thymidylate, methionine, and other important biomolecules. Also exhibits THF-independent aldolase activity toward beta-hydroxyamino acids, producing glycine and aldehydes, via a retro-aldol mechanism. This is Serine hydroxymethyltransferase from Anaplasma phagocytophilum (strain HZ).